A 190-amino-acid chain; its full sequence is Xanthine phosphoribosyltransferase (190 aa).

Residues Leu-20 and Asn-27 each coordinate xanthine. 128–132 (ANGKA) is a 5-phospho-alpha-D-ribose 1-diphosphate binding site. Lys-156 provides a ligand contact to xanthine.

It belongs to the purine/pyrimidine phosphoribosyltransferase family. Xpt subfamily. In terms of assembly, homodimer.

Its subcellular location is the cytoplasm. The enzyme catalyses XMP + diphosphate = xanthine + 5-phospho-alpha-D-ribose 1-diphosphate. The protein operates within purine metabolism; XMP biosynthesis via salvage pathway; XMP from xanthine: step 1/1. Functionally, converts the preformed base xanthine, a product of nucleic acid breakdown, to xanthosine 5'-monophosphate (XMP), so it can be reused for RNA or DNA synthesis. The protein is Xanthine phosphoribosyltransferase of Stutzerimonas stutzeri (strain A1501) (Pseudomonas stutzeri).